The following is a 96-amino-acid chain: Co-chaperonin GroES (96 aa).

It belongs to the GroES chaperonin family. Heptamer of 7 subunits arranged in a ring. Interacts with the chaperonin GroEL.

It localises to the cytoplasm. In terms of biological role, together with the chaperonin GroEL, plays an essential role in assisting protein folding. The GroEL-GroES system forms a nano-cage that allows encapsulation of the non-native substrate proteins and provides a physical environment optimized to promote and accelerate protein folding. GroES binds to the apical surface of the GroEL ring, thereby capping the opening of the GroEL channel. This is Co-chaperonin GroES from Albidiferax ferrireducens (strain ATCC BAA-621 / DSM 15236 / T118) (Rhodoferax ferrireducens).